Consider the following 859-residue polypeptide: Linoleate 9S-lipoxygenase B (859 aa).

Residues 34–158 (INIGASVVDG…RYKSDRIFFA (125 aa)) form the PLAT domain. The Lipoxygenase domain occupies 161-859 (AYLPSETPQP…GKGIPNSVSI (699 aa)). The disordered stretch occupies residues 213–246 (EYARPILGGSSEYPYPRRGRTGREPTKADPNCES). The segment covering 233 to 244 (TGREPTKADPNC) has biased composition (basic and acidic residues). Fe cation is bound by residues His-521, His-526, His-711, and Ile-859.

Belongs to the lipoxygenase family. In terms of assembly, monomer. Requires Fe cation as cofactor. In terms of tissue distribution, fruit specific.

The protein resides in the cytoplasm. It carries out the reaction (9Z,12Z)-octadecadienoate + O2 = (9S)-hydroperoxy-(10E,12Z)-octadecadienoate. The protein operates within lipid metabolism; oxylipin biosynthesis. Functionally, plant lipoxygenase may be involved in a number of diverse aspects of plant physiology including growth and development, pest resistance, and senescence or responses to wounding. It catalyzes the hydroperoxidation of lipids containing a cis,cis-1,4-pentadiene structure. This Solanum lycopersicum (Tomato) protein is Linoleate 9S-lipoxygenase B (LOX1.2).